A 460-amino-acid chain; its full sequence is 7-cyano-7-deazaguanine synthase 2 (460 aa).

Residue cysteine 2 is the For GATase activity of the active site. The 224-residue stretch at 2–225 folds into the Glutamine amidotransferase type-2 domain; sequence CSVTGVLIIK…PYSIVEVNDN (224 aa). 245 to 255 is a binding site for ATP; sequence ASGGLDSTVAA. 4 residues coordinate Zn(2+): cysteine 426, cysteine 434, cysteine 437, and cysteine 440.

It belongs to the QueC family. Zn(2+) serves as cofactor.

It catalyses the reaction 7-carboxy-7-deazaguanine + NH4(+) + ATP = 7-cyano-7-deazaguanine + ADP + phosphate + H2O + H(+). The protein operates within purine metabolism; 7-cyano-7-deazaguanine biosynthesis. Its function is as follows. Catalyzes the ATP-dependent conversion of 7-carboxy-7-deazaguanine (CDG) to 7-cyano-7-deazaguanine (preQ(0)). The protein is 7-cyano-7-deazaguanine synthase 2 (queC2) of Sulfurisphaera tokodaii (strain DSM 16993 / JCM 10545 / NBRC 100140 / 7) (Sulfolobus tokodaii).